Consider the following 128-residue polypeptide: MFS18 protein (128 aa).

Positions 1–25 (MARSSKMMVAARLLALALAVSTAEA) are cleaved as a signal peptide. Residues 26–79 (RNIKTTTTEKKDDAVVQPQTFPPFDRLGGGASPAFGGLPGGSIPGSSIPGFSMP) form a disordered region. Gly residues predominate over residues 52 to 68 (LGGGASPAFGGLPGGSI). 11 tandem repeats follow at residues 64-67 (PGGS), 64-75 (PGGSIPGSSIPG), 69-72 (PGSS), 69-80 (PGSSIPGFSMPG), 74-77 (PGFS), 79-82 (PGSG), 81-92 (SGSSLPGFSLPG), 86-89 (PGFS), 91-94 (PGSG), 104-107 (PGFS), and 113-116 (PGSP). The tract at residues 64–92 (PGGSIPGSSIPGFSMPGSGSSLPGFSLPG) is 3 X approximate tandem repeats. An 8 X 4 AA approximate repeats region spans residues 64 to 116 (PGGSIPGSSIPGFSMPGSGSSLPGFSLPGSGTMPLFGGGSPGFSGFGGMPGSP). Over residues 69–79 (PGSSIPGFSMP) the composition is skewed to low complexity. A compositionally biased stretch (gly residues) spans 99–113 (FGGGSPGFSGFGGMP). The interval 99–128 (FGGGSPGFSGFGGMPGSPTAGSVPEHANKP) is disordered.

Enhanced expression in male flowers. Accumulates in the glumes and in anther walls, paleas and lemmas of mature florets.

The sequence is that of MFS18 protein (MFS18) from Zea mays (Maize).